Reading from the N-terminus, the 369-residue chain is Omega-amidase, chloroplastic (369 aa).

A chloroplast-targeting transit peptide spans 1-63; sequence MKSAISSSLF…SALRSISSSM (63 aa). N-acetylalanine is present on Ala-64. In terms of domain architecture, CN hydrolase spans 88–337; that stretch reads FNIGLCQLSV…EAIIIAEIDY (250 aa). Glu-127 (proton acceptor) is an active-site residue. Lys-201 functions as the Proton donor in the catalytic mechanism. The Nucleophile role is filled by Cys-242.

It belongs to the nitrilase superfamily. NIT1/NIT2 family.

The protein resides in the plastid. It is found in the chloroplast. The catalysed reaction is a monoamide of a dicarboxylate + H2O = a dicarboxylate + NH4(+). Omega-amidase involved in the metabolism of asparagine. Probably also closely coupled with glutamine transamination in the methionine salvage cycle. Can use alpha-ketosuccinamate and alpha-hydroxysuccinamate as substrates, producing respectively oxaloacetate and malate, or alpha-ketoglutaramate, producing alpha-ketoglutarate. The chain is Omega-amidase, chloroplastic from Arabidopsis thaliana (Mouse-ear cress).